A 948-amino-acid chain; its full sequence is Valine--tRNA ligase (948 aa).

Residues 40 to 50 (PNVTGSLHMGH) carry the 'HIGH' region motif. Residues 551–555 (KMSKS) carry the 'KMSKS' region motif. Lys-554 is an ATP binding site. Residues 879–945 (LIDKGAELAR…GKLAEQHARI (67 aa)) are a coiled coil.

It belongs to the class-I aminoacyl-tRNA synthetase family. ValS type 1 subfamily. In terms of assembly, monomer.

The protein resides in the cytoplasm. The enzyme catalyses tRNA(Val) + L-valine + ATP = L-valyl-tRNA(Val) + AMP + diphosphate. In terms of biological role, catalyzes the attachment of valine to tRNA(Val). As ValRS can inadvertently accommodate and process structurally similar amino acids such as threonine, to avoid such errors, it has a 'posttransfer' editing activity that hydrolyzes mischarged Thr-tRNA(Val) in a tRNA-dependent manner. This Pseudomonas syringae pv. tomato (strain ATCC BAA-871 / DC3000) protein is Valine--tRNA ligase.